The sequence spans 101 residues: Small ribosomal subunit protein uS14A (101 aa).

The protein belongs to the universal ribosomal protein uS14 family. In terms of assembly, part of the 30S ribosomal subunit. Contacts proteins S3 and S10.

Functionally, binds 16S rRNA, required for the assembly of 30S particles and may also be responsible for determining the conformation of the 16S rRNA at the A site. This is Small ribosomal subunit protein uS14A from Mycolicibacterium smegmatis (strain ATCC 700084 / mc(2)155) (Mycobacterium smegmatis).